Consider the following 156-residue polypeptide: Small ribosomal subunit protein uS7 (156 aa).

This sequence belongs to the universal ribosomal protein uS7 family. In terms of assembly, part of the 30S ribosomal subunit. Contacts proteins S9 and S11.

One of the primary rRNA binding proteins, it binds directly to 16S rRNA where it nucleates assembly of the head domain of the 30S subunit. Is located at the subunit interface close to the decoding center, probably blocks exit of the E-site tRNA. This chain is Small ribosomal subunit protein uS7, found in Burkholderia multivorans (strain ATCC 17616 / 249).